A 366-amino-acid polypeptide reads, in one-letter code: MPNTFGHLFRITTWGESHGKGVGVVIDGCPPRIPLSEEDIQKELDRRRPGQSKITTQRKERDIAAILSGTFNGMTLGTPIMIWVKNEDARPEAYAEMEKIYRPSHADFTYQAKYGIRNWQGGGRSSARETIGRVAGGAVGGKVLQFLYPEIEVIAWVSEVHGLKSLCDPNTVTREDVESNILRWPNAENLGEALKEIERAQKEGDTVGGIVECIVRGMPVGLGEPVFDKLEADLAKAMLSLPASKGFEIGSGFRGALMRGSEHNDPFYMEGNKVRTKTNWSGGVQGGISNGENLYFRVAFKPVATIAQEQQTVSVDGEEVILRARGRHDPCVLPRAVPIVEAMTKLVLVDHALRQKAIELTPRSFS.

NADP(+) is bound at residue Arg47. Residues 124–126, Gly286, 301–305, and Arg327 each bind FMN; these read RSS and KPVAT.

Belongs to the chorismate synthase family. Homotetramer. FMNH2 serves as cofactor.

It carries out the reaction 5-O-(1-carboxyvinyl)-3-phosphoshikimate = chorismate + phosphate. Its pathway is metabolic intermediate biosynthesis; chorismate biosynthesis; chorismate from D-erythrose 4-phosphate and phosphoenolpyruvate: step 7/7. Functionally, catalyzes the anti-1,4-elimination of the C-3 phosphate and the C-6 proR hydrogen from 5-enolpyruvylshikimate-3-phosphate (EPSP) to yield chorismate, which is the branch point compound that serves as the starting substrate for the three terminal pathways of aromatic amino acid biosynthesis. This reaction introduces a second double bond into the aromatic ring system. The chain is Chorismate synthase from Methylacidiphilum infernorum (isolate V4) (Methylokorus infernorum (strain V4)).